A 202-amino-acid chain; its full sequence is Ribonuclease HII (202 aa).

An RNase H type-2 domain is found at 11 to 200; the sequence is GLIAGVDEVG…VRKAIEEFNR (190 aa). Positions 17, 18, and 109 each coordinate a divalent metal cation.

This sequence belongs to the RNase HII family. Mn(2+) is required as a cofactor. Mg(2+) serves as cofactor.

It localises to the cytoplasm. The catalysed reaction is Endonucleolytic cleavage to 5'-phosphomonoester.. Functionally, endonuclease that specifically degrades the RNA of RNA-DNA hybrids. The polypeptide is Ribonuclease HII (Actinobacillus succinogenes (strain ATCC 55618 / DSM 22257 / CCUG 43843 / 130Z)).